A 212-amino-acid polypeptide reads, in one-letter code: MADSIEDAVSRAMSESPERNFRETVDLAINLRDLDLADPNNRVDESIVLPSGTGQDTHIVVFAEGETALRAEDVADDVLDSDDLEDLGDDDNAAKDLADETDFFIAEADLMQDIGRYLGTVLGPRGKMPTPLQPDDDVVETVNRMKNTVQVRSGERRTFHTRVGAEDMDADAIADNVDVILRRLFTDLEKGPQNIDTVYVKTTMGPAVEVPA.

It belongs to the universal ribosomal protein uL1 family. As to quaternary structure, part of the 50S ribosomal subunit.

Its function is as follows. Binds directly to 23S rRNA. Probably involved in E site tRNA release. Protein L1 is also a translational repressor protein, it controls the translation of its operon by binding to its mRNA. The chain is Large ribosomal subunit protein uL1 from Natronomonas pharaonis (strain ATCC 35678 / DSM 2160 / CIP 103997 / JCM 8858 / NBRC 14720 / NCIMB 2260 / Gabara) (Halobacterium pharaonis).